A 350-amino-acid chain; its full sequence is tRNA uridine(34) hydroxylase (350 aa).

In terms of domain architecture, Rhodanese spans 146-240 (DDPDAVFIDM…YARKAREQGL (95 aa)). Cys200 acts as the Cysteine persulfide intermediate in catalysis. The interval 314-350 (PEEEQRRRRAGRENGNKIFNKSRGRLNTQLGIPDPAE) is disordered. Residues 316–328 (EEQRRRRAGRENG) show a composition bias toward basic and acidic residues.

This sequence belongs to the TrhO family.

It catalyses the reaction uridine(34) in tRNA + AH2 + O2 = 5-hydroxyuridine(34) in tRNA + A + H2O. Its function is as follows. Catalyzes oxygen-dependent 5-hydroxyuridine (ho5U) modification at position 34 in tRNAs. The chain is tRNA uridine(34) hydroxylase from Citrobacter koseri (strain ATCC BAA-895 / CDC 4225-83 / SGSC4696).